Reading from the N-terminus, the 459-residue chain is Exodeoxyribonuclease 7 large subunit (459 aa).

It belongs to the XseA family. As to quaternary structure, heterooligomer composed of large and small subunits.

The protein resides in the cytoplasm. The catalysed reaction is Exonucleolytic cleavage in either 5'- to 3'- or 3'- to 5'-direction to yield nucleoside 5'-phosphates.. Functionally, bidirectionally degrades single-stranded DNA into large acid-insoluble oligonucleotides, which are then degraded further into small acid-soluble oligonucleotides. The protein is Exodeoxyribonuclease 7 large subunit of Yersinia pestis bv. Antiqua (strain Antiqua).